Reading from the N-terminus, the 332-residue chain is Acetyl-coenzyme A carboxylase carboxyl transferase subunit beta (332 aa).

The CoA carboxyltransferase N-terminal domain maps to 24–293 (LWIKCPDSGH…PEVIVESEPE (270 aa)). The segment at 288–332 (VESEPEPEPEPVVAEIIPPTSDLPVSAPAPAPVAAQTPAPAAPSA) is disordered. A compositionally biased stretch (low complexity) spans 298 to 332 (PVVAEIIPPTSDLPVSAPAPAPVAAQTPAPAAPSA).

This sequence belongs to the AccD/PCCB family. As to quaternary structure, acetyl-CoA carboxylase is a heterohexamer composed of biotin carboxyl carrier protein (AccB), biotin carboxylase (AccC) and two subunits each of ACCase subunit alpha (AccA) and ACCase subunit beta (AccD).

The protein resides in the cytoplasm. The catalysed reaction is N(6)-carboxybiotinyl-L-lysyl-[protein] + acetyl-CoA = N(6)-biotinyl-L-lysyl-[protein] + malonyl-CoA. It participates in lipid metabolism; malonyl-CoA biosynthesis; malonyl-CoA from acetyl-CoA: step 1/1. Its function is as follows. Component of the acetyl coenzyme A carboxylase (ACC) complex. Biotin carboxylase (BC) catalyzes the carboxylation of biotin on its carrier protein (BCCP) and then the CO(2) group is transferred by the transcarboxylase to acetyl-CoA to form malonyl-CoA. This Rhodopseudomonas palustris (strain BisB18) protein is Acetyl-coenzyme A carboxylase carboxyl transferase subunit beta.